A 1448-amino-acid chain; its full sequence is Probable serine/threonine-protein kinase irlB (1448 aa).

The segment covering 412–423 (DDDDYDDYDDDD) has biased composition (acidic residues). The disordered stretch occupies residues 412–446 (DDDDYDDYDDDDDHHSGCNNNNNNNNDGDHNEDEN). A compositionally biased stretch (low complexity) spans 428–437 (GCNNNNNNNN). Coiled-coil stretches lie at residues 666–817 (AESE…EIQN), 887–921 (EIQL…SNMK), and 974–1016 (ENNK…QDED). A disordered region spans residues 975–1008 (NNKKQNLINDNNNNNNNNNNNNNNNNNNNNNNKL). A compositionally biased stretch (low complexity) spans 978–1008 (KQNLINDNNNNNNNNNNNNNNNNNNNNNNKL). The Protein kinase domain maps to 1027–1293 (RNESNILGRG…IQNVLNHPLF (267 aa)). ATP-binding positions include 1033–1041 (LGRGSNGTL) and Lys-1056. Asp-1151 functions as the Proton acceptor in the catalytic mechanism. Residues 1296-1448 (LEKKIQFIDA…TIDYLFNFYN (153 aa)) form the KEN domain.

The protein belongs to the protein kinase superfamily. Ser/Thr protein kinase family.

It carries out the reaction L-seryl-[protein] + ATP = O-phospho-L-seryl-[protein] + ADP + H(+). It catalyses the reaction L-threonyl-[protein] + ATP = O-phospho-L-threonyl-[protein] + ADP + H(+). This is Probable serine/threonine-protein kinase irlB (irlB-1) from Dictyostelium discoideum (Social amoeba).